Reading from the N-terminus, the 74-residue chain is uncharacterized protein (74 aa).

This is an uncharacterized protein from Bacillus subtilis (strain 168).